The sequence spans 219 residues: Tetratricopeptide repeat protein 9A (219 aa).

The segment at 1 to 49 (MERKGLAARSSGNPSPPALGEGPRPVPPPCVPSGGGAPERGQAGTAAEP) is disordered. The stretch at 56–89 (AHEFKSQGAQCYKDKKFREAIGKYHRALLELKGL) is one TPR 1 repeat. The tract at residues 94-115 (EERDARPASSAGVPKSSRLSEE) is disordered. Ser-102 carries the phosphoserine modification. TPR repeat units lie at residues 125-160 (IDCYNSLAACLLQAELVNYERVKEYCLKVLKKEGEN) and 161-194 (FKALYRSGVAFYHLGDYDKALYYLKEARTRQPTD).

The protein belongs to the TTC9 family.

This chain is Tetratricopeptide repeat protein 9A (Ttc9), found in Mus musculus (Mouse).